Here is a 1215-residue protein sequence, read N- to C-terminus: Pesticidal crystal protein Cry1Ka (1215 aa).

This sequence belongs to the delta endotoxin family.

Functionally, promotes colloidosmotic lysis by binding to the midgut epithelial cells of insects. Selectively toxic to Artogeia rapae but not active on Plutella xylostella. This chain is Pesticidal crystal protein Cry1Ka (cry1Ka), found in Bacillus thuringiensis subsp. morrisoni.